The primary structure comprises 41 residues: Large ribosomal subunit protein bL36 (41 aa).

Belongs to the bacterial ribosomal protein bL36 family.

The protein is Large ribosomal subunit protein bL36 of Bartonella tribocorum (strain CIP 105476 / IBS 506).